The chain runs to 841 residues: Probable outer membrane usher protein EcpC (841 aa).

Residues 1–29 form the signal peptide; it reads MPLRRFSPGLKAQFAFGMVFLFVQPDASA.

This sequence belongs to the EcpC/MatD family.

Its function is as follows. Part of the ecpRABCDE operon, which encodes the E.coli common pilus (ECP). ECP is found in both commensal and pathogenic strains and plays a dual role in early-stage biofilm development and host cell recognition. The sequence is that of Probable outer membrane usher protein EcpC (ecpC) from Escherichia coli O6:H1 (strain CFT073 / ATCC 700928 / UPEC).